Here is a 283-residue protein sequence, read N- to C-terminus: Large ribosomal subunit protein uL2 (283 aa).

Disordered stretches follow at residues 1-59 and 222-283; these read MSIK…GGHK and RGVA…TGGQ.

It belongs to the universal ribosomal protein uL2 family. As to quaternary structure, part of the 50S ribosomal subunit. Forms a bridge to the 30S subunit in the 70S ribosome.

Functionally, one of the primary rRNA binding proteins. Required for association of the 30S and 50S subunits to form the 70S ribosome, for tRNA binding and peptide bond formation. It has been suggested to have peptidyltransferase activity; this is somewhat controversial. Makes several contacts with the 16S rRNA in the 70S ribosome. This chain is Large ribosomal subunit protein uL2, found in Salinibacter ruber (strain DSM 13855 / M31).